A 206-amino-acid chain; its full sequence is SIAELCKVLTTGPLNADTEVVVGCPAPYLTLARSQLPDSVGVAAQNCYKVAKGAFTGEISPAMLKDLNIGWVILGHSERRAIFGESDELIADKVAHALAEGLKVIACIGETLQEREAGQTEAVCFRQTKAIADKVKDWSNVVVAYEPVWAIGTGKTATPEQAQEVHVALRKWFTDNVSADVSASIRIQYGGSVTAANCRELAAKPD.

Catalysis depends on H76, which acts as the Electrophile. The active-site Proton acceptor is E146.

This sequence belongs to the triosephosphate isomerase family. Homodimer.

The catalysed reaction is D-glyceraldehyde 3-phosphate = dihydroxyacetone phosphate. The protein operates within carbohydrate biosynthesis; gluconeogenesis. It functions in the pathway carbohydrate degradation; glycolysis; D-glyceraldehyde 3-phosphate from glycerone phosphate: step 1/1. This is Triosephosphate isomerase (Tpi) from Aedes togoi (Mosquito).